The chain runs to 60 residues: Potassium channel toxin alpha-KTx 29.3 (60 aa).

The N-terminal stretch at 1-28 is a signal peptide; it reads MKSVCGVLIILVVLTTMLSISTFSTVGA. 3 disulfide bridges follow: Cys32–Cys51, Cys40–Cys56, and Cys44–Cys58.

It belongs to the short scorpion toxin superfamily. Potassium channel inhibitor family. Alpha-KTx 29 subfamily. Expressed by the venom gland.

The protein localises to the secreted. Weakly inhibits the Kv1.3/KCNA3 channel (1 uM of thetoxin inhibits currents by 13.2%) and Kv7.1/KCNQ1 channel (10 uM of the toxin inhibits currents by 27.7%). The chain is Potassium channel toxin alpha-KTx 29.3 from Lychas mucronatus (Chinese swimming scorpion).